The sequence spans 518 residues: Membrane-bound lytic murein transglycosylase F (518 aa).

A signal peptide spans 1-21; the sequence is MKKLKINYLFIGILALLLAVA. The segment at 22–269 is non-LT domain; it reads LWPSIPWFGK…RIEEKYLGHG (248 aa). An LT domain region spans residues 270 to 518; the sequence is DDFDYVDTRT…SRKGSEEKQN (249 aa). The active site involves glutamate 314.

This sequence in the N-terminal section; belongs to the bacterial solute-binding protein 3 family. The protein in the C-terminal section; belongs to the transglycosylase Slt family.

The protein localises to the cell outer membrane. It catalyses the reaction Exolytic cleavage of the (1-&gt;4)-beta-glycosidic linkage between N-acetylmuramic acid (MurNAc) and N-acetylglucosamine (GlcNAc) residues in peptidoglycan, from either the reducing or the non-reducing ends of the peptidoglycan chains, with concomitant formation of a 1,6-anhydrobond in the MurNAc residue.. In terms of biological role, murein-degrading enzyme that degrades murein glycan strands and insoluble, high-molecular weight murein sacculi, with the concomitant formation of a 1,6-anhydromuramoyl product. Lytic transglycosylases (LTs) play an integral role in the metabolism of the peptidoglycan (PG) sacculus. Their lytic action creates space within the PG sacculus to allow for its expansion as well as for the insertion of various structures such as secretion systems and flagella. The protein is Membrane-bound lytic murein transglycosylase F of Escherichia coli (strain ATCC 8739 / DSM 1576 / NBRC 3972 / NCIMB 8545 / WDCM 00012 / Crooks).